The following is a 216-amino-acid chain: Large ribosomal subunit protein uL3 (216 aa).

The residue at position 157 (Gln-157) is an N5-methylglutamine.

It belongs to the universal ribosomal protein uL3 family. Part of the 50S ribosomal subunit. Forms a cluster with proteins L14 and L19. In terms of processing, methylated by PrmB.

Functionally, one of the primary rRNA binding proteins, it binds directly near the 3'-end of the 23S rRNA, where it nucleates assembly of the 50S subunit. This is Large ribosomal subunit protein uL3 from Xanthomonas campestris pv. campestris (strain 8004).